Reading from the N-terminus, the 780-residue chain is ATP-dependent 6-phosphofructokinase, muscle type (780 aa).

Thr-2 is modified (N-acetylthreonine). An N-terminal catalytic PFK domain 1 region spans residues 2 to 390 (THEEHHAART…NWEVYKLLAH (389 aa)). ATP is bound by residues Gly-25, 88-89 (RC), and 118-121 (GDGS). Asp-119 serves as a coordination point for Mg(2+). The residue at position 133 (Ser-133) is a Phosphoserine. Residues 164–166 (SID), Arg-201, 208–210 (MGR), Glu-264, Arg-292, and 298–301 (HVQR) contribute to the substrate site. Asp-166 acts as the Proton acceptor in catalysis. Ser-377 carries the phosphoserine modification. The segment at 391–401 (IRPPAPKSGSY) is interdomain linker. The C-terminal regulatory PFK domain 2 stretch occupies residues 402 to 780 (TVAVMNVGAP…SRKRSGEATV (379 aa)). Beta-D-fructose 2,6-bisphosphate-binding positions include Arg-471 and 528-532 (TVSNN). An O-linked (GlcNAc) serine glycan is attached at Ser-530. Lys-557 bears the N6-(2-hydroxyisobutyryl)lysine mark. Residues Arg-566, 573-575 (MGG), Glu-629, Arg-655, and 661-664 (HMQQ) each bind beta-D-fructose 2,6-bisphosphate. Phosphoserine is present on Ser-667. Arg-735 serves as a coordination point for beta-D-fructose 2,6-bisphosphate. Ser-775 carries the post-translational modification Phosphoserine; by PKA.

Belongs to the phosphofructokinase type A (PFKA) family. ATP-dependent PFK group I subfamily. Eukaryotic two domain clade 'E' sub-subfamily. In terms of assembly, homo- and heterotetramers. Phosphofructokinase (PFK) enzyme functions as a tetramer composed of different combinations of 3 types of subunits, called PFKM (M), PFKL (L) and PFKP (P). The composition of the PFK tetramer differs according to the tissue type it is present in. The kinetic and regulatory properties of the tetrameric enzyme are dependent on the subunit composition, hence can vary across tissues. Interacts (via C-terminus) with HK1 (via N-terminal spermatogenic cell-specific region). Requires Mg(2+) as cofactor. In terms of processing, glcNAcylation decreases enzyme activity.

It localises to the cytoplasm. It catalyses the reaction beta-D-fructose 6-phosphate + ATP = beta-D-fructose 1,6-bisphosphate + ADP + H(+). It participates in carbohydrate degradation; glycolysis; D-glyceraldehyde 3-phosphate and glycerone phosphate from D-glucose: step 3/4. Allosterically activated by ADP, AMP, or fructose 2,6-bisphosphate, and allosterically inhibited by ATP or citrate. Catalyzes the phosphorylation of D-fructose 6-phosphate to fructose 1,6-bisphosphate by ATP, the first committing step of glycolysis. The polypeptide is ATP-dependent 6-phosphofructokinase, muscle type (PFKM) (Oryctolagus cuniculus (Rabbit)).